The following is a 251-amino-acid chain: Methionine aminopeptidase (251 aa).

Substrate is bound at residue histidine 77. Positions 94, 105, and 169 each coordinate a divalent metal cation. Histidine 176 is a binding site for substrate. Residues glutamate 202 and glutamate 233 each coordinate a divalent metal cation.

The protein belongs to the peptidase M24A family. Methionine aminopeptidase type 1 subfamily. In terms of assembly, monomer. Requires Co(2+) as cofactor. It depends on Zn(2+) as a cofactor. Mn(2+) serves as cofactor. Fe(2+) is required as a cofactor.

The enzyme catalyses Release of N-terminal amino acids, preferentially methionine, from peptides and arylamides.. Its function is as follows. Removes the N-terminal methionine from nascent proteins. The N-terminal methionine is often cleaved when the second residue in the primary sequence is small and uncharged (Met-Ala-, Cys, Gly, Pro, Ser, Thr, or Val). Requires deformylation of the N(alpha)-formylated initiator methionine before it can be hydrolyzed. The polypeptide is Methionine aminopeptidase (Mycoplasma capricolum subsp. capricolum (strain California kid / ATCC 27343 / NCTC 10154)).